The sequence spans 586 residues: MHPLQRVFRAQRLSAPLTSMCWVLLRTFRAHNSTSCPDPEGKSSEGVQKDFSSRLATGPTFQHFLRSASVPQEKPSSPEVEDPPPYLSGDELLGRQRKVYLETYGCQMNVNDTEIAWSILQKSGYLRTSNLQEADVILLVTCSIREKAEQTIWNRLHQLKVLKAKRPRSRVPLRIGILGCMAERLKGEILNREKMVDLLAGPDAYRDLPRLLAVVESGQQAANVLLSLDETYADIMPVQTSPSATSAFVSIMRGCDNMCSYCIVPFTRGRERSRPVASILDEVRKLSEQGLKEVTLLGQNVNSFRDNSEVQFSSTGSANLSRGFTTNYKPKQGGLRFSHLLDQVSRIDPEMRIRFTSPHPKDFPDEVLQLIRERHNICKQIHLPAQSGSSRVLEAMRRGYSREAYVALVHHIREAIPGVGLSSDFITGFCGETEDDHLQTVSLLREVQYNTGFLFAYSMRQKTRAYHRLKDDVPEEVKLRRLEELITVFREEASKVNATSVGCTQLVLVEGFSKRSTTDLCGRNDANLKVIFPDAEVEDITDPGLKVRAQPGDYVLVKIISASSQTLKGHILCRTTMKDSSMNCLT.

Residues 1-30 (MHPLQRVFRAQRLSAPLTSMCWVLLRTFRA) constitute a mitochondrion transit peptide. The disordered stretch occupies residues 68 to 90 (ASVPQEKPSSPEVEDPPPYLSGD). The region spanning 97–217 (RKVYLETYGC…LPRLLAVVES (121 aa)) is the MTTase N-terminal domain. Positions 106, 142, 180, 255, 259, and 262 each coordinate [4Fe-4S] cluster. Residues 241–495 (SPSATSAFVS…ITVFREEASK (255 aa)) form the Radical SAM core domain. Positions 498–573 (ATSVGCTQLV…SQTLKGHILC (76 aa)) constitute a TRAM domain.

It belongs to the methylthiotransferase family. MiaB subfamily. As to quaternary structure, interacts with CDK5R1 (p35 form). CDK5RAP1, CDK5RAP2 and CDK5RAP3 show competitive binding to CDK5R1. Forms a complex with CDK5R1 and CDK5. The cofactor is [4Fe-4S] cluster. Expressed in brain.

The protein localises to the mitochondrion inner membrane. The catalysed reaction is N(6)-dimethylallyladenosine(37) in tRNA + (sulfur carrier)-SH + AH2 + 2 S-adenosyl-L-methionine = 2-methylsulfanyl-N(6)-dimethylallyladenosine(37) in tRNA + (sulfur carrier)-H + 5'-deoxyadenosine + L-methionine + A + S-adenosyl-L-homocysteine + 2 H(+). Methylthiotransferase that catalyzes the conversion of N6-(dimethylallyl)adenosine (i(6)A) to 2-methylthio-N6-(dimethylallyl)adenosine (ms(2)i(6)A) at position 37 (adjacent to the 3'-end of the anticodon) of four mitochondrial DNA-encoded tRNAs (Ser(UCN), Phe, Tyr and Trp). Essential for efficient and highly accurate protein translation by the ribosome. Specifically inhibits CDK5 activation by CDK5R1. Essential for efficient mitochondrial protein synthesis and respiratory chain. In Rattus norvegicus (Rat), this protein is Mitochondrial tRNA methylthiotransferase CDK5RAP1 (Cdk5rap1).